The sequence spans 499 residues: Type-1 glutamine synthetase 1 (499 aa).

The 97-residue stretch at 50–146 (PQLKFIRVCW…IFGEFFYLDN (97 aa)) folds into the GS beta-grasp domain. The GS catalytic domain occupies 158 to 499 (PRNSLQRAID…DQILKLLELF (342 aa)).

This sequence belongs to the glutamine synthetase family.

The catalysed reaction is L-glutamate + NH4(+) + ATP = L-glutamine + ADP + phosphate + H(+). The polypeptide is Type-1 glutamine synthetase 1 (glnA1) (Dictyostelium discoideum (Social amoeba)).